The sequence spans 420 residues: CinA-like protein (420 aa).

This sequence belongs to the CinA family.

This chain is CinA-like protein, found in Chlorobium phaeobacteroides (strain BS1).